The primary structure comprises 197 residues: uncharacterized protein (197 aa).

The tract at residues 1-31 (MMHFRKKSSISNTSDHDGANRASDVKISEDD) is disordered. Phosphoserine occurs at positions 11 and 23. Residues 14–31 (SDHDGANRASDVKISEDD) are compositionally biased toward basic and acidic residues. Glycyl lysine isopeptide (Lys-Gly) (interchain with G-Cter in ubiquitin) cross-links involve residues Lys26 and Lys32. Positions 157–197 (VGGASSQMYGEQAVYQPQQHVQTEEKQKKKKKGLFGRMKKK) are disordered. Over residues 158–177 (GGASSQMYGEQAVYQPQQHV) the composition is skewed to polar residues. Basic residues predominate over residues 184 to 197 (KKKKKGLFGRMKKK).

To yeast YGR273c.

This is an uncharacterized protein from Saccharomyces cerevisiae (strain ATCC 204508 / S288c) (Baker's yeast).